A 337-amino-acid chain; its full sequence is Glyceraldehyde-3-phosphate dehydrogenase, cytosolic (337 aa).

Residues 13–14, D35, and R82 each bind NAD(+); that span reads RI. Residues 153-155, T184, 213-214, and R236 contribute to the D-glyceraldehyde 3-phosphate site; these read SCT and TG. The active-site Nucleophile is C154. Residue N318 participates in NAD(+) binding.

The protein belongs to the glyceraldehyde-3-phosphate dehydrogenase family. Homotetramer.

It is found in the cytoplasm. It carries out the reaction D-glyceraldehyde 3-phosphate + phosphate + NAD(+) = (2R)-3-phospho-glyceroyl phosphate + NADH + H(+). It functions in the pathway carbohydrate degradation; glycolysis; pyruvate from D-glyceraldehyde 3-phosphate: step 1/5. Functionally, key enzyme in glycolysis that catalyzes the first step of the pathway by converting D-glyceraldehyde 3-phosphate (G3P) into 3-phospho-D-glyceroyl phosphate. Essential for the maintenance of cellular ATP levels and carbohydrate metabolism. The chain is Glyceraldehyde-3-phosphate dehydrogenase, cytosolic (GAPC) from Craterostigma plantagineum (Blue gem).